The primary structure comprises 544 residues: Membrane protein insertase YidC (544 aa).

Transmembrane regions (helical) follow at residues 15–35 (LFLI…MLSF), 321–341 (LWYL…DVIP), 343–363 (WGLS…PLTF), 409–429 (LGGC…YSLV), and 506–526 (MPIM…IYWI).

This sequence belongs to the OXA1/ALB3/YidC family. Type 1 subfamily. Interacts with the Sec translocase complex via SecD. Specifically interacts with transmembrane segments of nascent integral membrane proteins during membrane integration.

The protein resides in the cell inner membrane. In terms of biological role, required for the insertion and/or proper folding and/or complex formation of integral membrane proteins into the membrane. Involved in integration of membrane proteins that insert both dependently and independently of the Sec translocase complex, as well as at least some lipoproteins. Aids folding of multispanning membrane proteins. This Borrelia garinii subsp. bavariensis (strain ATCC BAA-2496 / DSM 23469 / PBi) (Borreliella bavariensis) protein is Membrane protein insertase YidC.